The following is a 781-amino-acid chain: MAAALLLLRGLRPGPEPRPRRLWGLLSGRGPGLSSGAGARRPYAARGTPVGPAAAGGHAPQSLLLRILTPSFEGISGLLLKQHIVPNAVRLWPLSGSTLYFNTSRMKQKNKDNDKPKGKTPEDDEEEKRRKEREDQMYRERLRTLFIIALVMSLLNSLSTSGGSISWADFVNEMLAKGEVQRVQVVPESDVVEVYLHPGAVVFGRPRLALMYRMQVANIDKFEEKLRAAEDELNIESKDRIPVSYKRTGFFGNALYALGMTAVGLAILWYVFRLAGMTGREGGFSAFNQLKMARFTIVDGKTGKGVSFQDVAGMHEAKLEVREFVDYLKSPERFLQLGAKVPKGALLLGPPGCGKTLLAKAVATEAQVPFLAMAGPEFVEVIGGLGAARVRSLFKEARARAPCIVYIDEIDAVGKKRSTSMSGFSNTEEEQTLNQLLVEMDGMGTTDHVIVLASTNRADVLDNALMRPGRLDRHVFIDLPTLQERREIFEQHLKGLKLTQPSSFYSQRLAELTPGFSGADIANICNEAALHAAREGHTSVHTFNFEYAVERVIAGTAKKSKILSKEEQRVVAFHESGHALVGWLLEHTEAVMKVSIAPRTNAALGFSQMLPRDQYLFTKEQLFERMCMALGGRAAEAISFSRVTSGAQDDLRKVTRIAYSMVKQFGMAPSIGPVSFPEAQEGLMGIGRRPFSQGLQQMMDHEAKLLVAKAYRHTEKVLLDNLDKLQALANALLEKEVINYEDIEALIGPPPHGPKKMIAPQKWIDAEKERQASGEEEAPAP.

A mitochondrion-targeting transit peptide spans 1–43 (MAAALLLLRGLRPGPEPRPRRLWGLLSGRGPGLSSGAGARRPY). 2 disordered regions span residues 22 to 56 (LWGLLSGRGPGLSSGAGARRPYAARGTPVGPAAAG) and 103 to 135 (TSRMKQKNKDNDKPKGKTPEDDEEEKRRKERED). A compositionally biased stretch (low complexity) spans 36–56 (GAGARRPYAARGTPVGPAAAG). A propeptide spans 44 to 105 (AARGTPVGPA…GSTLYFNTSR (62 aa)) (removed in mature form). The Mitochondrial matrix portion of the chain corresponds to 106-144 (MKQKNKDNDKPKGKTPEDDEEEKRRKEREDQMYRERLRT). Over residues 109–135 (KNKDNDKPKGKTPEDDEEEKRRKERED) the composition is skewed to basic and acidic residues. A helical membrane pass occupies residues 145–165 (LFIIALVMSLLNSLSTSGGSI). Over 166–248 (SWADFVNEML…DRIPVSYKRT (83 aa)) the chain is Mitochondrial intermembrane. The chain crosses the membrane as a helical span at residues 249–269 (GFFGNALYALGMTAVGLAILW). Residues 270 to 781 (YVFRLAGMTG…ASGEEEAPAP (512 aa)) are Mitochondrial matrix-facing. ATP-binding residues include Ala-312, Gly-352, Cys-353, Gly-354, Lys-355, Thr-356, and Leu-357. Tyr-505 bears the 3'-nitrotyrosine mark. Position 574 (His-574) interacts with Zn(2+). Residue Glu-575 is part of the active site. 2 residues coordinate Zn(2+): His-578 and Asp-650. Residues 701-781 (HEAKLLVAKA…ASGEEEAPAP (81 aa)) are interaction with PPIF.

This sequence in the N-terminal section; belongs to the AAA ATPase family. It in the C-terminal section; belongs to the peptidase M41 family. As to quaternary structure, forms heterohexamers with SPG7 and AFG3L1. The m-AAA protease is either composed of homohexamers of AFG3L2 or heterohexamers of AFG3L1, AFG3L2 and/or SPG7. Component of the mitochondrial permeability transition pore complex (mPTPC), at least composed of SPG7, VDAC1 and PPIF. Interacts with MAIP1. Zn(2+) serves as cofactor. Post-translationally, upon import into the mitochondrion, the N-terminal transit peptide is cleaved by the mitochondrial-processing peptidase (MPP) to generate an intermediate form which undergoes a second proteolytic cleavage mediated by proteases AFG3L1 and/or AFG3L2 removing an additional N-terminal fragment to generate the proteolytically active mature form. Expressed in the brain and retina (at protein level).

It is found in the mitochondrion inner membrane. The enzyme catalyses ATP + H2O = ADP + phosphate + H(+). Its function is as follows. Catalytic component of the m-AAA protease, a protease that plays a key role in proteostasis of inner mitochondrial membrane proteins, and which is essential for axonal and neuron development. SPG7 possesses both ATPase and protease activities: the ATPase activity is required to unfold substrates, threading them into the internal proteolytic cavity for hydrolysis into small peptide fragments. The m-AAA protease exerts a dual role in the mitochondrial inner membrane: it mediates the processing of specific regulatory proteins and ensures protein quality control by degrading misfolded polypeptides. Mediates protein maturation of the mitochondrial ribosomal subunit MRPL32/bL32m by catalyzing the cleavage of the presequence of MRPL32/bL32m prior to assembly into the mitochondrial ribosome. Acts as a regulator of calcium in neurons by mediating degradation of SMDT1/EMRE before its assembly with the uniporter complex, limiting the availability of SMDT1/EMRE for MCU assembly and promoting efficient assembly of gatekeeper subunits with MCU. Also regulates mitochondrial calcium by catalyzing degradation of MCU. Plays a role in the formation and regulation of the mitochondrial permeability transition pore (mPTP) and its proteolytic activity is dispensable for this function. The protein is Mitochondrial inner membrane m-AAA protease component paraplegin of Mus musculus (Mouse).